Here is a 653-residue protein sequence, read N- to C-terminus: Macrolide export ATP-binding/permease protein MacB (653 aa).

The region spanning Leu-6–Ala-244 is the ABC transporter domain. Position 42-49 (Gly-42–Ser-49) interacts with ATP. 4 helical membrane-spanning segments follow: residues Leu-278–Gly-298, Leu-526–Met-546, Met-587–Val-607, and Ala-616–Met-636.

This sequence belongs to the ABC transporter superfamily. Macrolide exporter (TC 3.A.1.122) family. As to quaternary structure, homodimer.

The protein localises to the cell inner membrane. Non-canonical ABC transporter that contains transmembrane domains (TMD), which form a pore in the inner membrane, and an ATP-binding domain (NBD), which is responsible for energy generation. Confers resistance against macrolides. This is Macrolide export ATP-binding/permease protein MacB from Burkholderia pseudomallei (strain 1710b).